The chain runs to 219 residues: Small ribosomal subunit protein uS3 (219 aa).

The region spanning 39-107 is the KH type-2 domain; the sequence is LRKFLKKKLH…EVLIDIQEVR (69 aa).

The protein belongs to the universal ribosomal protein uS3 family. Part of the 30S ribosomal subunit. Forms a tight complex with proteins S10 and S14.

In terms of biological role, binds the lower part of the 30S subunit head. Binds mRNA in the 70S ribosome, positioning it for translation. The protein is Small ribosomal subunit protein uS3 of Desulfatibacillum aliphaticivorans.